Reading from the N-terminus, the 136-residue chain is Histone H3.2 (136 aa).

The disordered stretch occupies residues 1–43; that stretch reads MARTKQTARKSTGGKAPRKQLATKAARKSAPATGGVKKPHRFR. Lys-5 carries the post-translational modification N6-methylated lysine. Lys-10 bears the N6-acetyllysine; alternate mark. Lys-10 carries the post-translational modification N6-methylated lysine; alternate. The residue at position 11 (Ser-11) is a Phosphoserine. Thr-12 is subject to Phosphothreonine. Lys-15 is subject to N6-acetyllysine. N6-acetyllysine; alternate occurs at positions 19 and 24. Residues Lys-19 and Lys-24 each carry the N6-methylated lysine; alternate modification. The residue at position 28 (Lys-28) is an N6-methylated lysine. Ser-29 carries the phosphoserine modification. The residue at position 37 (Lys-37) is an N6-methylated lysine.

The protein belongs to the histone H3 family. In terms of assembly, the nucleosome is a histone octamer containing two molecules each of H2A, H2B, H3 and H4 assembled in one H3-H4 heterotetramer and two H2A-H2B heterodimers. The octamer wraps approximately 147 bp of DNA. In terms of processing, acetylation is generally linked to gene activation. Can be acetylated to form H3K9ac, H3K14ac, H3K18ac and H3K23ac. H3K9ac could compete with H3K9me and prevent gene silencing. H3K9ac is restricted to euchromatin. Methylated to form mainly H3K4me, H3K9me, H3K18me, H3K23me, H3K27me and H3K36me. H3K4me1/2/3, H3K9me3, H3K27me3 and H3K36me1/2/3 are typical marks for euchromatin, whereas heterochromatic chromocenters are enriched in H3K9me1/2 and H3K27me1/2. H2BK143ub1 is probably prerequisite for H3K4me. Post-translationally, can be phosphorylated to form H3S10ph, H3T11ph and H3S28ph. Expressed in bicellular pollen, root tips, shoot apices, young leaves and ovules.

The protein localises to the nucleus. It localises to the nucleolus. Its subcellular location is the chromosome. Functionally, core component of nucleosome. Nucleosomes wrap and compact DNA into chromatin, limiting DNA accessibility to the cellular machineries which require DNA as a template. Histones thereby play a central role in transcription regulation, DNA repair, DNA replication and chromosomal stability. DNA accessibility is regulated via a complex set of post-translational modifications of histones, also called histone code, and nucleosome remodeling. The chain is Histone H3.2 (YAH3) from Lilium longiflorum (Trumpet lily).